Reading from the N-terminus, the 174-residue chain is ATP-dependent protease subunit HslV (174 aa).

T2 is a catalytic residue. G157, C160, and T163 together coordinate Na(+).

The protein belongs to the peptidase T1B family. HslV subfamily. A double ring-shaped homohexamer of HslV is capped on each side by a ring-shaped HslU homohexamer. The assembly of the HslU/HslV complex is dependent on binding of ATP.

It localises to the cytoplasm. It catalyses the reaction ATP-dependent cleavage of peptide bonds with broad specificity.. Its activity is regulated as follows. Allosterically activated by HslU binding. Protease subunit of a proteasome-like degradation complex believed to be a general protein degrading machinery. In Yersinia enterocolitica serotype O:8 / biotype 1B (strain NCTC 13174 / 8081), this protein is ATP-dependent protease subunit HslV.